Here is a 93-residue protein sequence, read N- to C-terminus: Acylphosphatase (93 aa).

The Acylphosphatase-like domain maps to 6 to 93 (RAIVTVKGLV…GEFDTFDVRY (88 aa)). Residues Arg21 and Asn39 contribute to the active site.

This sequence belongs to the acylphosphatase family.

It carries out the reaction an acyl phosphate + H2O = a carboxylate + phosphate + H(+). This chain is Acylphosphatase (acyP), found in Geobacter metallireducens (strain ATCC 53774 / DSM 7210 / GS-15).